A 1053-amino-acid chain; its full sequence is MSVDVQRITDFIWYVNSIWMLPIQIFSAIYILQKHLGLGALAALVTTLMVMACNYPLTRLQRNYQSDIMNAKDDRMKATSEILKNMKILKLQAWDNQFLNKVKTLRKKEYDCLWKSLRLQDFTTFILWGAPSLISVVTFVTCMLMGVKLTAGAVLSALATFQMLQSPIFGLPDLLSALVQSKVSADRIASYLQQSETQKDAVEYCSNDHTEFSVEIENGAFSWEPESSRPTLDDIELKVKSGMKVAICGAVGSGKSSLPSSILGEIQKLKGTVRVSGKQAYVPQSPWILSGTIRDNILFGSIYESEKYERTVKACALIKDFELFSNGDLTEIGERGINMSGGQKQRIQIARAVYQNADIYLLDDPFSAVDAHTGRELFEDCLMGILKDKTVLYVTHQVEFLPAADLILVMQNGRVMQAGKFEELLKQNIGFEVLTQCDSEHNISTENKKKEAKLVQDEETEKGVIGKEVYLTYLTTVKGGLLVPFIILAQSCFQMLQIASNYWMAWTAPPTAESIPKLGMGRILLVYALLAAGSSLCVLARTILVAIGGLSTAETFFSRMLCSIFRAPMSYFDSTPTGRILNRASTDQSVLDLEMAVKLGWCAFSIIQIVGTIFVMSQVAWQVCVIFIPVAVACVFYQRYYTPTERELSRMSGVERAPILHHFAESLAGATTIRAFDQRDRFISSNLVLIDSHSRPWFHVASAMEWLSFRLNLLSHFVFAFSLVLLVTLPEGVINPSIAGLGVTYGLSLNVLQATVIWNICNAENKMISVERILQHSKIPSEAPLVIDDQRPLDNWPNVGSIVFRDLQVRYAEHFPAVLKNITCAFPGGKKIGVVGRTGSGKSTLIQALFRIVEPSHGTIVIDNVDITKIGLHDLRSRLGIIPQDNALFDGTIRLNLDPLAQYTDREIWEALDKCQLGDVIRAKDEKLDATVVENGENWSVGQRQLVCLGRVLLKKSNILVLDEATASVDSATDGVIQKIINQEFKDRTVVTIAHRIHTVIESDLVLVLSDGRIAEFDSPAKLLQREDSFFSKLIKEYSLRSNHFAGSNDLLS.

One can recognise an ABC transmembrane type-1 1 domain in the interval 1 to 180 (MSVDVQRITD…LPDLLSALVQ (180 aa)). The next 4 membrane-spanning stretches (helical) occupy residues 11–31 (FIWY…AIYI), 36–56 (LGLG…CNYP), 125–145 (FILW…CMLM), and 151–171 (AGAV…IFGL). The 224-residue stretch at 214-437 (VEIENGAFSW…NIGFEVLTQC (224 aa)) folds into the ABC transporter 1 domain. Residue 249 to 256 (GAVGSGKS) coordinates ATP. 5 helical membrane passes run 481 to 503 (LLVP…SNYW), 523 to 543 (ILLV…ARTI), 595 to 615 (MAVK…TIFV), 714 to 734 (LSHF…EGVI), and 738 to 758 (IAGL…TVIW). The ABC transmembrane type-1 2 domain maps to 483 to 765 (VPFIILAQSC…VIWNICNAEN (283 aa)). The ABC transporter 2 domain maps to 804-1036 (FRDLQVRYAE…EDSFFSKLIK (233 aa)). 836–843 (GRTGSGKS) lines the ATP pocket.

It belongs to the ABC transporter superfamily. ABCC family. Conjugate transporter (TC 3.A.1.208) subfamily.

Its subcellular location is the membrane. The enzyme catalyses ATP + H2O + xenobioticSide 1 = ADP + phosphate + xenobioticSide 2.. In terms of biological role, pump for glutathione S-conjugates. The chain is Putative ABC transporter C family member 15 (ABCC15) from Arabidopsis thaliana (Mouse-ear cress).